The sequence spans 241 residues: Accessory protein p30II (241 aa).

2 consecutive short sequence motifs (nuclear localization signal) follow at residues 73-78 and 91-98; these read RRCRSR and GPRRSRPR. 2 stretches are compositionally biased toward low complexity: residues 79–100 and 107–136; these read CVSPRGGAFSPGGPRRSRPRLS and PSSTASSSSLSFNSSSKDNSPSTNSSTSRS. Positions 79-151 are disordered; it reads CVSPRGGAFS…GKHRNSPADT (73 aa). The Mitochondrial targeting signal signature appears at 175–184; it reads LRVWRLCTRR.

The protein belongs to the HTLV-1 accessory protein p30II family. As to quaternary structure, p30II binds to the KIX domains of CREBBP and EP300.

Its subcellular location is the host nucleus. It is found in the host nucleolus. The protein resides in the host mitochondrion inner membrane. Its function is as follows. p30II is a multifunctional regulator that sequesters EP300/CREBBP and down-regulates CREB-responsive element (CRE) and Tax-responsive element (TRE) mediated transcription. Specifically binds and represses tax/rex mRNA nuclear export. Since Tax and Rex are positive regulators of viral gene expression, their inhibition by p30II reduces virion production, and allows the virus to escape the host immune surveillance and persist latently in an immune-competent host. Functionally, p13II increases mitochondrial permeability to monovalent cations, producing a rapid, membrane potential-dependent influx of potassium. This could involve a channel-forming activity. Interferes with cell proliferation and transformation and promotes apoptosis induced by ceramide and Fas ligand, probably using the Ras signaling. The sequence is that of Accessory protein p30II from Human T-cell leukemia virus 1 (strain Japan ATK-1 subtype A) (HTLV-1).